Here is a 142-residue protein sequence, read N- to C-terminus: Large-conductance mechanosensitive channel (142 aa).

3 consecutive transmembrane segments (helical) span residues 19-39, 41-61, and 78-98; these read VGIIIGAAFTAIVSSLVADLV, PFIALFTGGIDFSGWFYALDG, and FAFGNFIMAVINFLIIAFVVF.

This sequence belongs to the MscL family. In terms of assembly, homopentamer.

It localises to the cell inner membrane. In terms of biological role, channel that opens in response to stretch forces in the membrane lipid bilayer. May participate in the regulation of osmotic pressure changes within the cell. The chain is Large-conductance mechanosensitive channel from Roseobacter denitrificans (strain ATCC 33942 / OCh 114) (Erythrobacter sp. (strain OCh 114)).